Here is a 101-residue protein sequence, read N- to C-terminus: MTMNGIPVKLLNEAQGHIVSLELTTGATYRGKLVESEDSMNVQLRDVIATEPQGAVTHMDQIFVRGSQIKFIVVPDLLKNAPLFKKNSSRPMPPIRGPKRR.

Residues 6 to 78 enclose the Sm domain; that stretch reads IPVKLLNEAQ…IKFIVVPDLL (73 aa).

Belongs to the snRNP core protein family. As to quaternary structure, component of the Sm core complex, present in spliceosomal snRNP U1, U2, U4/U6 and U5. The core complex contains SMB1, SMD1, SMD2, SMD3, SME1, SMX3 and SMX2 (Sm proteins B, D1, D2, D3, E, F and G, respectively), and is probably a heptameric ring structure. SMD3 specifically interacts with SMB1. Belongs to the CWC complex (or CEF1-associated complex), a spliceosome sub-complex reminiscent of a late-stage spliceosome composed of the U2, U5 and U6 snRNAs and at least BUD13, BUD31, BRR2, CDC40, CEF1, CLF1, CUS1, CWC2, CWC15, CWC21, CWC22, CWC23, CWC24, CWC25, CWC27, ECM2, HSH155, IST3, ISY1, LEA1, MSL1, NTC20, PRP8, PRP9, PRP11, PRP19, PRP21, PRP22, PRP45, PRP46, SLU7, SMB1, SMD1, SMD2, SMD3, SMX2, SMX3, SNT309, SNU114, SPP2, SYF1, SYF2, RSE1 and YJU2. Component of the U4/U6-U5 tri-snRNP complex composed of the U4, U6 and U5 snRNAs and at least PRP3, PRP4, PRP6, PRP8, PRP18, PRP31, PRP38, SNU13, SNU23, SNU66, SNU114, SPP381, SMB1, SMD1, SMD2, SMD3, SMX2, SMX3, LSM2, LSM3, LSM4, LSM5, LSM6, LSM7, LSM8, BRR2 and DIB1.

It localises to the cytoplasm. The protein localises to the cytosol. Its subcellular location is the nucleus. Its function is as follows. Plays a role in pre-mRNA splicing as a core component of the spliceosomal U1, U2, U4 and U5 small nuclear ribonucleoproteins (snRNPs), the building blocks of the spliceosome. Also binds telomerase RNA and is required for its accumulation. The polypeptide is Small nuclear ribonucleoprotein Sm D3 (SMD3) (Saccharomyces cerevisiae (strain ATCC 204508 / S288c) (Baker's yeast)).